The sequence spans 269 residues: Indole-3-glycerol phosphate synthase 1 (269 aa).

The protein belongs to the TrpC family.

The catalysed reaction is 1-(2-carboxyphenylamino)-1-deoxy-D-ribulose 5-phosphate + H(+) = (1S,2R)-1-C-(indol-3-yl)glycerol 3-phosphate + CO2 + H2O. It functions in the pathway amino-acid biosynthesis; L-tryptophan biosynthesis; L-tryptophan from chorismate: step 4/5. This Streptomyces coelicolor (strain ATCC BAA-471 / A3(2) / M145) protein is Indole-3-glycerol phosphate synthase 1 (trpC1).